The following is a 343-amino-acid chain: UDP-glucuronic acid decarboxylase 6 (343 aa).

Residues 1-22 (MASNSSNGTTTTKPPPMPSPLR) are disordered. A2 carries the N-acetylalanine modification. 62–87 (DNYFTGSKDNLKKWIGHPRFELIRHD) provides a ligand contact to NAD(+). R171 serves as a coordination point for substrate. Y174 (proton acceptor) is an active-site residue. 174-178 (YDEGK) contributes to the NAD(+) binding site. Residue N203 coordinates substrate. Position 215 (R215) interacts with NAD(+). Substrate is bound by residues 216–220 (VVSNF), 233–240 (QKPGTQTR), and 300–304 (DPRQR).

The protein belongs to the NAD(P)-dependent epimerase/dehydratase family. UDP-glucuronic acid decarboxylase subfamily. NAD(+) serves as cofactor.

Its subcellular location is the cytoplasm. It carries out the reaction UDP-alpha-D-glucuronate + H(+) = UDP-alpha-D-xylose + CO2. It functions in the pathway nucleotide-sugar biosynthesis; UDP-alpha-D-xylose biosynthesis; UDP-alpha-D-xylose from UDP-alpha-D-glucuronate: step 1/1. Functionally, catalyzes the NAD-dependent decarboxylation of UDP-glucuronic acid to UDP-xylose. Necessary for the biosynthesis of the core tetrasaccharide in glycosaminoglycan biosynthesis. In Arabidopsis thaliana (Mouse-ear cress), this protein is UDP-glucuronic acid decarboxylase 6 (UXS6).